A 1356-amino-acid chain; its full sequence is Vascular endothelial growth factor receptor 2 (1356 aa).

The N-terminal stretch at 1–19 (MQSKVLLAVALWLCVETRA) is a signal peptide. Residues 20 to 764 (ASVGLPSVSL…EGAQEKTNLE (745 aa)) lie on the Extracellular side of the membrane. N-linked (GlcNAc...) asparagine glycosylation is found at N46, N66, N96, N143, N158, and N245. 7 consecutive Ig-like C2-type domains span residues 46 to 110 (NTTL…ETDL), 141 to 207 (NKNK…INDE), 224 to 320 (YDVV…KNST), 328 to 414 (PFVA…HVVS), 421 to 548 (PQIG…FHVT), 551 to 660 (PEIT…RQLT), and 667 to 753 (PTIT…AFFI). An intrachain disulfide couples C53 to C103. C150 and C200 are joined by a disulfide. A disulfide bond links C246 and C307. N-linked (GlcNAc...) asparagine glycans are attached at residues N318, N374, N395, N511, N523, N580, N613, N619, N631, N675, N704, and N721. Disulfide bonds link C445/C530 and C571/C642. C688 and C737 are oxidised to a cystine. A helical membrane pass occupies residues 765-785 (IIILVGTAVIAMFFWLLLVII). Residues 786 to 1356 (LRTVKRANGG…SGTTLSSPPV (571 aa)) are Cytoplasmic-facing. The residue at position 801 (Y801) is a Phosphotyrosine. The Protein kinase domain maps to 834-1162 (LKLGKPLGRG…FSELVEHLGN (329 aa)). Residues 840–848 (LGRGAFGQV) and K868 contribute to the ATP site. A Phosphotyrosine; by autocatalysis modification is found at Y951. Residues S982 and S984 each carry the phosphoserine modification. Y996 is modified (phosphotyrosine; by autocatalysis). The cysteines at positions 1024 and 1045 are disulfide-linked. Residue D1028 is the Proton acceptor of the active site. Phosphotyrosine; by autocatalysis is present on residues Y1054, Y1059, Y1175, and Y1214. Residues S1231 and S1235 each carry the phosphoserine modification. T1238 is modified (phosphothreonine). The segment at 1274–1318 (DRTKLSPSFGGMVPSKSRESVASEGSNQTSGYQSGYHSDDTDTTV) is disordered. The span at 1296 to 1309 (SEGSNQTSGYQSGY) shows a compositional bias: polar residues. Phosphotyrosine; by autocatalysis is present on residues Y1305, Y1309, and Y1319.

The protein belongs to the protein kinase superfamily. Tyr protein kinase family. CSF-1/PDGF receptor subfamily. In terms of assembly, homodimer in the presence of bound dimeric VEGFA, VEGFC or VEGFD ligands; monomeric in the absence of bound ligands. Can also form heterodimers with FLT1/VEGFR1 and KDR/VEGFR2. Interacts (tyrosine phosphorylated) with LFYN, NCK1, PLCG1. Interacts (tyrosine-phosphorylated active form preferentially) with DAB2IP (via C2 domain and active form preferentially); the interaction occurs at the late phase of VEGFA response and inhibits KDR/VEGFR2 activity. Interacts with SHBSH2D2A/TSAD, GRB2, MYOF, CBL and PDCD6. Interacts (via C-terminus domain) with ERN1 (via kinase domain); the interaction is facilitated in a XBP1 isoform 1- and vascular endothelial growth factor (VEGF)-dependent manner in endothelial cells. Interacts (via juxtamembrane region) with chaperone PDCL3 (via thioredoxin fold region); the interaction leads to increased KDR/VEGFR2 abundance through inhibition of its ubiquitination and degradation. Interacts (tyrosine phosphorylated) with CCDC88A/GIV (via SH2-like region); binding requires autophosphorylation of the KDR/VEGFR2 C-terminal region. Interacts with isoform 2 of BSG. Interacts with SLC31A1; this interaction is induced upon VEGFA stimulation leading to SLC31A1 and KDR subsequent co-internalization to early endosomes, thereby activating KDR downstream signaling in endothelial cells. As to quaternary structure, (Microbial infection) Interacts with HIV-1 Tat. Post-translationally, N-glycosylated. In terms of processing, ubiquitinated. Tyrosine phosphorylation of the receptor promotes its poly-ubiquitination, leading to its degradation via the proteasome or lysosomal proteases. Autophosphorylated on tyrosine residues upon ligand binding. Autophosphorylation occurs in trans, i.e. one subunit of the dimeric receptor phosphorylates tyrosine residues on the other subunit. Phosphorylation at Tyr-951 is important for interaction with SH2D2A/TSAD and VEGFA-mediated reorganization of the actin cytoskeleton. Phosphorylation at Tyr-1175 is important for interaction with PLCG1 and SHB. Phosphorylation at Tyr-1214 is important for interaction with NCK1 and FYN. Dephosphorylated by PTPRB. Dephosphorylated by PTPRJ at Tyr-951, Tyr-996, Tyr-1054, Tyr-1059, Tyr-1175 and Tyr-1214. Post-translationally, the inhibitory disulfide bond between Cys-1024 and Cys-1045 may serve as a specific molecular switch for H(2)S-induced modification that regulates KDR/VEGFR2 function. In terms of tissue distribution, detected in cornea (at protein level). Widely expressed.

The protein resides in the cell junction. The protein localises to the endoplasmic reticulum. It localises to the cell membrane. It is found in the cytoplasm. Its subcellular location is the nucleus. The protein resides in the cytoplasmic vesicle. The protein localises to the early endosome. It localises to the secreted. It catalyses the reaction L-tyrosyl-[protein] + ATP = O-phospho-L-tyrosyl-[protein] + ADP + H(+). Its activity is regulated as follows. Present in an inactive conformation in the absence of bound ligand. Binding of VEGFA, VEGFC or VEGFD leads to dimerization and activation by autophosphorylation on tyrosine residues. Inhibited by the small molecule PTK inhibitor SU5614 ((3Z)-5-Chloro-3-[(3,5-dimethyl-1H-pyrrol-2-yl)methylene]-1,3-dihydro-2H-indol-2-one). May be regulated by hydrogen sulfide (H(2)S) levels via a H(2)S-sensitive intracellular disulfide bond. Tyrosine-protein kinase that acts as a cell-surface receptor for VEGFA, VEGFC and VEGFD. Plays an essential role in the regulation of angiogenesis, vascular development, vascular permeability, and embryonic hematopoiesis. Promotes proliferation, survival, migration and differentiation of endothelial cells. Promotes reorganization of the actin cytoskeleton. Isoforms lacking a transmembrane domain, such as isoform 2 and isoform 3, may function as decoy receptors for VEGFA, VEGFC and/or VEGFD. Isoform 2 plays an important role as negative regulator of VEGFA- and VEGFC-mediated lymphangiogenesis by limiting the amount of free VEGFA and/or VEGFC and preventing their binding to FLT4. Modulates FLT1 and FLT4 signaling by forming heterodimers. Binding of vascular growth factors to isoform 1 leads to the activation of several signaling cascades. Activation of PLCG1 leads to the production of the cellular signaling molecules diacylglycerol and inositol 1,4,5-trisphosphate and the activation of protein kinase C. Mediates activation of MAPK1/ERK2, MAPK3/ERK1 and the MAP kinase signaling pathway, as well as of the AKT1 signaling pathway. Mediates phosphorylation of PIK3R1, the regulatory subunit of phosphatidylinositol 3-kinase, reorganization of the actin cytoskeleton and activation of PTK2/FAK1. Required for VEGFA-mediated induction of NOS2 and NOS3, leading to the production of the signaling molecule nitric oxide (NO) by endothelial cells. Phosphorylates PLCG1. Promotes phosphorylation of FYN, NCK1, NOS3, PIK3R1, PTK2/FAK1 and SRC. The chain is Vascular endothelial growth factor receptor 2 from Homo sapiens (Human).